The chain runs to 161 residues: Probable K(+)/H(+) antiporter subunit E (161 aa).

2 helical membrane-spanning segments follow: residues 4 to 21 (WFPYPLLSIALLLMWLLL) and 28 to 50 (GSIVLGLVVSTVLAWVTLNLQPA).

The protein belongs to the CPA3 antiporters (TC 2.A.63) subunit E family. May form a hetero-oligomeric complex that consists of six subunits: PhaAB, PhaC, PhaD, PhaE, PhaF and PhaG.

The protein localises to the cell membrane. Part of a K(+) efflux system which is required for the adaptation of R.meliloti to alkaline pH as well as for the infection process during symbiotic nodule development. The sequence is that of Probable K(+)/H(+) antiporter subunit E (phaE) from Rhizobium meliloti (strain 1021) (Ensifer meliloti).